A 178-amino-acid polypeptide reads, in one-letter code: ATP-dependent protease subunit HslV (178 aa).

The active site involves Thr7. Positions 162, 165, and 168 each coordinate Na(+).

It belongs to the peptidase T1B family. HslV subfamily. In terms of assembly, a double ring-shaped homohexamer of HslV is capped on each side by a ring-shaped HslU homohexamer. The assembly of the HslU/HslV complex is dependent on binding of ATP.

It localises to the cytoplasm. It catalyses the reaction ATP-dependent cleavage of peptide bonds with broad specificity.. Allosterically activated by HslU binding. Protease subunit of a proteasome-like degradation complex believed to be a general protein degrading machinery. In Burkholderia lata (strain ATCC 17760 / DSM 23089 / LMG 22485 / NCIMB 9086 / R18194 / 383), this protein is ATP-dependent protease subunit HslV.